Consider the following 1728-residue polypeptide: Lysophospholipase NTE1 (1728 aa).

Residues 1–44 lie on the Cytoplasmic side of the membrane; it reads MDSSSIAHESDIVSTERNILPERFISNKQQGNYLEDGSGDGNGK. The chain crosses the membrane as a helical span at residues 45–65; that stretch reads AAEHWLLAAIFNFFWVISYFI. Over 66–97 the chain is Lumenal; it reads SGSTHIAFRSSWYIVSLLLLKFPKWIIVEANH. The helical transmembrane segment at 98 to 118 threads the bilayer; it reads IHLTIPFSVLVVTLAIIFYVS. At 119 to 1728 the chain is on the cytoplasmic side; that stretch reads YEFLKGRLLS…GFFLHRRNSI (1610 aa). Residues 141–150 are compositionally biased toward low complexity; sequence SLNSKNSKSS. Disordered regions lie at residues 141-167, 285-368, 406-436, 454-488, 596-660, and 687-756; these read SLNS…RRRR, RKKK…DEST, NDNV…LSTS, TEAS…VTTP, NLQK…TGSR, and ASPS…FTSF. Positions 153-162 are enriched in basic and acidic residues; that stretch reads LHHDSKDSNT. 2 stretches are compositionally biased toward polar residues: residues 293–303 and 326–336; these read SRHGQYNNNSD and MRSSSRNQNIP. Positions 345 to 367 are enriched in acidic residues; the sequence is SSDEESDINDGDSESQSESDDES. Polar residues-rich tracts occupy residues 406–424, 454–479, and 599–609; these read NDNV…NYTN, TEAS…SKSI, and KGFQSPTSSRL. Residues 610–628 show a composition bias toward low complexity; it reads TSNFNGNSNNQRTNSRNSQ. 2 stretches are compositionally biased toward polar residues: residues 642 to 657 and 729 to 756; these read ELSQ…TPIT and IYNN…FTSF. A nucleoside 3',5'-cyclic phosphate-binding positions include 854–987 and 983–1121; these read SPTL…LTSL and SLTS…VAKK. Positions 1034-1055 are disordered; that stretch reads PELEENSTDYPNDGEEKDSSRD. Over residues 1036 to 1049 the composition is skewed to acidic residues; that stretch reads LEENSTDYPNDGEE. The region spanning 1422-1586 is the PNPLA domain; it reads LVLGGGGARG…VDNLPVLEMK (165 aa). The GXGXXG signature appears at 1426 to 1431; it reads GGGARG. The GXSXG motif lies at 1453 to 1457; the sequence is GTSIG. Residue S1455 is the Nucleophile of the active site. D1573 (proton acceptor) is an active-site residue. A DGA/G motif is present at residues 1573-1575; it reads DGG.

Belongs to the NTE family.

The protein localises to the endoplasmic reticulum membrane. It catalyses the reaction a 1-acyl-sn-glycero-3-phosphocholine + H2O = sn-glycerol 3-phosphocholine + a fatty acid + H(+). Inhibited by organophosphorus esters. Functionally, intracellular phospholipase B that catalyzes the double deacylation of phosphatidylcholine (PC) to glycerophosphocholine (GroPCho). Plays an important role in membrane lipid homeostasis. Responsible for the rapid PC turnover in response to inositol, elevated temperatures, or when choline is present in the growth medium. This is Lysophospholipase NTE1 (NTE1) from Candida glabrata (strain ATCC 2001 / BCRC 20586 / JCM 3761 / NBRC 0622 / NRRL Y-65 / CBS 138) (Yeast).